Consider the following 38-residue polypeptide: Non-specific lipid-transfer protein P2 (38 aa).

The protein belongs to the plant LTP family.

Its subcellular location is the secreted. Functionally, plant non-specific lipid-transfer proteins transfer phospholipids as well as galactolipids across membranes. May play a role in wax or cutin deposition in the cell walls of expanding epidermal cells and certain secretory tissues. This is Non-specific lipid-transfer protein P2 from Vitis sp. (Grape).